The chain runs to 445 residues: tRNA-2-methylthio-N(6)-dimethylallyladenosine synthase (445 aa).

One can recognise an MTTase N-terminal domain in the interval 13 to 129 (KKLFIKTYGC…LPAMARAGRG (117 aa)). The [4Fe-4S] cluster site is built by Cys-22, Cys-58, Cys-92, Cys-163, Cys-167, and Cys-170. The region spanning 149 to 383 (TRRAPAAFLT…LTSQQKAAQE (235 aa)) is the Radical SAM core domain. The TRAM domain maps to 383–445 (EGMVGRELGV…PNSLAGVLAA (63 aa)).

It belongs to the methylthiotransferase family. MiaB subfamily. Monomer. [4Fe-4S] cluster is required as a cofactor.

The protein localises to the cytoplasm. It catalyses the reaction N(6)-dimethylallyladenosine(37) in tRNA + (sulfur carrier)-SH + AH2 + 2 S-adenosyl-L-methionine = 2-methylsulfanyl-N(6)-dimethylallyladenosine(37) in tRNA + (sulfur carrier)-H + 5'-deoxyadenosine + L-methionine + A + S-adenosyl-L-homocysteine + 2 H(+). In terms of biological role, catalyzes the methylthiolation of N6-(dimethylallyl)adenosine (i(6)A), leading to the formation of 2-methylthio-N6-(dimethylallyl)adenosine (ms(2)i(6)A) at position 37 in tRNAs that read codons beginning with uridine. This chain is tRNA-2-methylthio-N(6)-dimethylallyladenosine synthase, found in Paracoccus denitrificans (strain Pd 1222).